Reading from the N-terminus, the 332-residue chain is Ribosomal RNA small subunit methyltransferase H (332 aa).

S-adenosyl-L-methionine is bound by residues 36–38 (GGH), Asp-61, Phe-88, Asp-114, and Gln-121.

It belongs to the methyltransferase superfamily. RsmH family.

It is found in the cytoplasm. The enzyme catalyses cytidine(1402) in 16S rRNA + S-adenosyl-L-methionine = N(4)-methylcytidine(1402) in 16S rRNA + S-adenosyl-L-homocysteine + H(+). In terms of biological role, specifically methylates the N4 position of cytidine in position 1402 (C1402) of 16S rRNA. The chain is Ribosomal RNA small subunit methyltransferase H from Pelodictyon phaeoclathratiforme (strain DSM 5477 / BU-1).